The primary structure comprises 212 residues: ER lumen protein-retaining receptor 1 (212 aa).

The Lumenal segment spans residues 1 to 4; it reads MNLF. A helical transmembrane segment spans residues 5-24; it reads RFLGDLSHLLAIILLLLKIW. The Cytoplasmic portion of the chain corresponds to 25 to 32; the sequence is KSRSCAGI. Residues 33-52 traverse the membrane as a helical segment; the sequence is SGKSQVLFAVVFTARYLDLF. Residues 47 to 48 are interaction with the K-D-E-L motif on target proteins; that stretch reads RY. At 53-58 the chain is on the lumenal side; that stretch reads TNYISL. A helical transmembrane segment spans residues 59 to 79; it reads YNTCMKVVYIACSFTTVWMIY. The Cytoplasmic segment spans residues 80 to 92; it reads SKFKATYDGNHDT. The helical transmembrane segment at 93–110 threads the bilayer; that stretch reads FRVEFLVVPTAILAFLVN. Over 111-116 the chain is Lumenal; that stretch reads HDFTPL. The chain crosses the membrane as a helical span at residues 117-135; it reads EILWTFSIYLESVAILPQL. Residues 136-149 are Cytoplasmic-facing; the sequence is FMVSKTGEAETITS. Residues 150–168 form a helical membrane-spanning segment; sequence HYLFALGVYRTLYLFNWIW. Residues 159 to 169 form an interaction with the K-D-E-L motif on target proteins region; that stretch reads RTLYLFNWIWR. Residues 169-178 are Lumenal-facing; it reads RYHFEGFFDL. A helical transmembrane segment spans residues 179-199; the sequence is IAIVAGLVQTVLYCDFFYLYI. Over 200 to 212 the chain is Cytoplasmic; the sequence is TKVLKGKKLSLPA. An important for recycling of cargo proteins with the sequence motif K-D-E-L from the Golgi to the endoplasmic reticulum region spans residues 204 to 207; that stretch reads KGKK. Residue S209 is modified to Phosphoserine; by PKA.

Belongs to the ERD2 family. In terms of assembly, upon ligand binding the receptor oligomerizes and interacts with components of the transport machinery such as ARFGAP1 and ARF1. In terms of processing, phosphorylation by PKA at Ser-209 is required for endoplasmic reticulum retention function.

The protein localises to the golgi apparatus membrane. The protein resides in the cytoplasmic vesicle. It localises to the COPI-coated vesicle membrane. It is found in the endoplasmic reticulum membrane. Its subcellular location is the endoplasmic reticulum-Golgi intermediate compartment membrane. Functionally, receptor for the C-terminal sequence motif K-D-E-L that is present on endoplasmic reticulum resident proteins and that mediates their recycling from the Golgi back to the endoplasmic reticulum. In Mus musculus (Mouse), this protein is ER lumen protein-retaining receptor 1 (Kdelr1).